Here is a 598-residue protein sequence, read N- to C-terminus: Beta-galactosidase (598 aa).

The signal sequence occupies residues 1-21 (MLRTTLAPLVLALALALPAAA). Glutamate 184 functions as the Proton donor in the catalytic mechanism. Catalysis depends on glutamate 260, which acts as the Nucleophile.

Belongs to the glycosyl hydrolase 35 family.

It catalyses the reaction Hydrolysis of terminal non-reducing beta-D-galactose residues in beta-D-galactosides.. Preferentially hydrolyzes beta(1-&gt;3) galactosyl linkages over beta(1-&gt;4) linkages. The sequence is that of Beta-galactosidase (bga) from Xanthomonas manihotis.